The sequence spans 227 residues: UPF0758 protein lpl2409 (227 aa).

Positions 102–225 constitute an MPN domain; that stretch reads RLSNTQQTYA…YSIFAENKWA (124 aa). The Zn(2+) site is built by His-173, His-175, and Asp-186. The JAMM motif signature appears at 173 to 186; sequence HNHPSGLSDASQQD.

The protein belongs to the UPF0758 family.

This is UPF0758 protein lpl2409 from Legionella pneumophila (strain Lens).